Reading from the N-terminus, the 248-residue chain is MLKHPTLNLLQQLGLAGMADAFTRLADNDESDNLSHGEWLALLLDQEATWRNNKRLALRLRNAKLHHPAVPEDIIRRAPREYDRTILDLLIAGDWIRKHENCAIVGPTGIGKSWLACALGHKACRDNHSVLYVRMPALLQSLEQARGIGSLATRLKSLGAVELLILDDYGLQPIDGNAPHYLLEILEGRYGRRSTLVTSQFPVARWHEKISDPTYADAILDRLVHNAHRLEMSGESMRRLRQPAEIQT.

Position 106-113 (106-113 (GPTGIGKS)) interacts with ATP.

The protein belongs to the IS21/IS1162 putative ATP-binding protein family.

This Sinorhizobium fredii (strain NBRC 101917 / NGR234) protein is Putative insertion sequence ATP-binding protein y4uH.